Here is a 251-residue protein sequence, read N- to C-terminus: Cell division protein ZapD (251 aa).

Belongs to the ZapD family. Interacts with FtsZ.

The protein localises to the cytoplasm. Cell division factor that enhances FtsZ-ring assembly. Directly interacts with FtsZ and promotes bundling of FtsZ protofilaments, with a reduction in FtsZ GTPase activity. The protein is Cell division protein ZapD of Burkholderia vietnamiensis (strain G4 / LMG 22486) (Burkholderia cepacia (strain R1808)).